The primary structure comprises 153 residues: uncharacterized protein (153 aa).

An N-terminal signal peptide occupies residues 1 to 22 (MKMLKKGTAVLFVMIMAVMLVA). A lipid anchor (N-palmitoyl cysteine) is attached at C23. C23 is lipidated: S-diacylglycerol cysteine. Residues 117-153 (DMNKIPGMSSNGDTSKGISMEESAKMLESQGYKEVSK) form a disordered region. The segment covering 124–133 (MSSNGDTSKG) has biased composition (polar residues).

The protein to E.coli YehR.

Its subcellular location is the cell membrane. This is an uncharacterized protein from Listeria monocytogenes serovar 1/2a (strain ATCC BAA-679 / EGD-e).